We begin with the raw amino-acid sequence, 180 residues long: FMN reductase (NADH) RutF (180 aa).

It belongs to the non-flavoprotein flavin reductase family. RutF subfamily.

It carries out the reaction FMNH2 + NAD(+) = FMN + NADH + 2 H(+). Catalyzes the reduction of FMN to FMNH2 which is used to reduce pyrimidine by RutA via the Rut pathway. This Bradyrhizobium diazoefficiens (strain JCM 10833 / BCRC 13528 / IAM 13628 / NBRC 14792 / USDA 110) protein is FMN reductase (NADH) RutF.